The chain runs to 219 residues: Histone H1.01 (219 aa).

2 stretches are compositionally biased toward low complexity: residues 1 to 19 and 27 to 39; these read MSET…GAKA and AAGG…PAGP. 2 disordered regions span residues 1–40 and 94–219; these read MSET…AGPS and LVQT…AKKK. Position 2 is an N-acetylserine (Ser-2). Residues 37–110 form the H15 domain; the sequence is AGPSVTELIT…GASGSFRLNK (74 aa). 4 stretches are compositionally biased toward basic residues: residues 119-134, 142-159, 167-185, and 192-219; these read APRK…KPAA, KKPK…KAKK, KAAK…KKAA, and KAVK…AKKK.

The protein belongs to the histone H1/H5 family.

Its subcellular location is the nucleus. The protein resides in the chromosome. Functionally, histones H1 are necessary for the condensation of nucleosome chains into higher-order structures. In Gallus gallus (Chicken), this protein is Histone H1.01.